The following is a 252-amino-acid chain: Carbohydrate deacetylase (252 aa).

Mg(2+) contacts are provided by histidine 59 and histidine 122.

This sequence belongs to the YdjC deacetylase family. As to quaternary structure, homodimer. Mg(2+) serves as cofactor.

Functionally, probably catalyzes the deacetylation of acetylated carbohydrates an important step in the degradation of oligosaccharides. The chain is Carbohydrate deacetylase from Vibrio cholerae serotype O1 (strain ATCC 39541 / Classical Ogawa 395 / O395).